The following is a 221-amino-acid chain: 7-cyano-7-deazaguanine synthase (221 aa).

10–20 (FSGGQDSTTCL) contributes to the ATP binding site. Zn(2+) contacts are provided by cysteine 186, cysteine 195, cysteine 198, and cysteine 201.

Belongs to the QueC family. Homodimer. Requires Zn(2+) as cofactor.

The enzyme catalyses 7-carboxy-7-deazaguanine + NH4(+) + ATP = 7-cyano-7-deazaguanine + ADP + phosphate + H2O + H(+). It participates in purine metabolism; 7-cyano-7-deazaguanine biosynthesis. In terms of biological role, catalyzes the ATP-dependent conversion of 7-carboxy-7-deazaguanine (CDG) to 7-cyano-7-deazaguanine (preQ(0)). This Geobacillus sp. (strain WCH70) protein is 7-cyano-7-deazaguanine synthase.